Here is a 197-residue protein sequence, read N- to C-terminus: MISQVRGTIMHRELDRVEIMTASGVAYECLIPLSVFESLPSEGQTVTLHTHLVVREDAWHLYGFAHAYERAVFQKLLHAKGVGPALALGILSALTPDRVVRALHEKDVLTLMRVPRVGRKKAEQIILDLADKIDAVGPAPATGTAPSPLGDDAVRALIALGYNQTEADRAVRAVVESGAPKDVSSLVRGALSRLTAK.

Residues 1–65 (MISQVRGTIM…EDAWHLYGFA (65 aa)) are domain I. The tract at residues 66–140 (HAYERAVFQK…DKIDAVGPAP (75 aa)) is domain II. The tract at residues 140 to 144 (PATGT) is flexible linker. The tract at residues 145 to 197 (APSPLGDDAVRALIALGYNQTEADRAVRAVVESGAPKDVSSLVRGALSRLTAK) is domain III.

It belongs to the RuvA family. In terms of assembly, homotetramer. Forms an RuvA(8)-RuvB(12)-Holliday junction (HJ) complex. HJ DNA is sandwiched between 2 RuvA tetramers; dsDNA enters through RuvA and exits via RuvB. An RuvB hexamer assembles on each DNA strand where it exits the tetramer. Each RuvB hexamer is contacted by two RuvA subunits (via domain III) on 2 adjacent RuvB subunits; this complex drives branch migration. In the full resolvosome a probable DNA-RuvA(4)-RuvB(12)-RuvC(2) complex forms which resolves the HJ.

The protein localises to the cytoplasm. Its function is as follows. The RuvA-RuvB-RuvC complex processes Holliday junction (HJ) DNA during genetic recombination and DNA repair, while the RuvA-RuvB complex plays an important role in the rescue of blocked DNA replication forks via replication fork reversal (RFR). RuvA specifically binds to HJ cruciform DNA, conferring on it an open structure. The RuvB hexamer acts as an ATP-dependent pump, pulling dsDNA into and through the RuvAB complex. HJ branch migration allows RuvC to scan DNA until it finds its consensus sequence, where it cleaves and resolves the cruciform DNA. In Gemmatimonas aurantiaca (strain DSM 14586 / JCM 11422 / NBRC 100505 / T-27), this protein is Holliday junction branch migration complex subunit RuvA.